Reading from the N-terminus, the 332-residue chain is uncharacterized protein (332 aa).

This is an uncharacterized protein from Schizosaccharomyces pombe (strain 972 / ATCC 24843) (Fission yeast).